The chain runs to 236 residues: Predicted GPI-anchored protein 43 (236 aa).

Residues 1–24 (MHQRNHHSILLTLLLYLQSIVALA) form the signal peptide. 3 N-linked (GlcNAc...) asparagine glycosylation sites follow: N192, N195, and N198. A lipid anchor (GPI-anchor amidated glycine) is attached at G208. The propeptide at 209-236 (SVCLTSSYLNSPIIILCAILTGTLFAMY) is removed in mature form.

The protein localises to the cell membrane. This chain is Predicted GPI-anchored protein 43 (PGA43), found in Candida albicans (strain SC5314 / ATCC MYA-2876) (Yeast).